A 451-amino-acid polypeptide reads, in one-letter code: Porin AaxA (451 aa).

A signal peptide spans 1-27; that stretch reads MASFHSSLLTALCTLCTYGILTMPAYG.

This sequence belongs to the OprB family.

It localises to the cell outer membrane. Its function is as follows. Facilitates L-arginine uptake, as part of the AaxABC system. The arginine uptake by the bacterium in the macrophage may be a virulence factor against the host innate immune response. In Chlamydia caviae (strain ATCC VR-813 / DSM 19441 / 03DC25 / GPIC) (Chlamydophila caviae), this protein is Porin AaxA (aaxA).